Here is a 295-residue protein sequence, read N- to C-terminus: Diaminopimelate epimerase (295 aa).

2 residues coordinate substrate: asparagine 13 and asparagine 69. The active-site Proton donor is the cysteine 78. Substrate-binding positions include glycine 79–asparagine 80, asparagine 173, asparagine 212, and glutamate 230–arginine 231. Residue cysteine 239 is the Proton acceptor of the active site. Glycine 240–threonine 241 contacts substrate.

This sequence belongs to the diaminopimelate epimerase family. As to quaternary structure, homodimer.

It is found in the cytoplasm. The catalysed reaction is (2S,6S)-2,6-diaminopimelate = meso-2,6-diaminopimelate. It functions in the pathway amino-acid biosynthesis; L-lysine biosynthesis via DAP pathway; DL-2,6-diaminopimelate from LL-2,6-diaminopimelate: step 1/1. In terms of biological role, catalyzes the stereoinversion of LL-2,6-diaminopimelate (L,L-DAP) to meso-diaminopimelate (meso-DAP), a precursor of L-lysine. This Methanococcus aeolicus (strain ATCC BAA-1280 / DSM 17508 / OCM 812 / Nankai-3) protein is Diaminopimelate epimerase.